Consider the following 88-residue polypeptide: Toxin RelE3 (88 aa).

Belongs to the RelE toxin family. Forms heterodimers with RelB3 and possibly a heterotetramer RelE3-RelB3(2)-RelE3 from 2 heterodimers. The heterotetramer is probably not very stable in solution.

Functionally, toxic component of a type II toxin-antitoxin (TA) system. Has RNase activity. Is very toxic upon expression in E.coli. Its toxic activity is probably neutralized by the cognate antitoxin RelB3. This is Toxin RelE3 (relE3) from Methanocaldococcus jannaschii (strain ATCC 43067 / DSM 2661 / JAL-1 / JCM 10045 / NBRC 100440) (Methanococcus jannaschii).